The following is a 268-amino-acid chain: MHRIDETFRRLRAQSRKALIPFITAGDPSLEAAVPVMHALVRAGADVIELGVPFSDPMADGPVIQHSSERALQRGVGLAYVLQTVDVFRQSDAVTPVVLMGYLNPLEIYGIARFTQQALASGVDGVLLVDLPPEEADEIRAIFSAAGLALIVLASPTTSASRLATLSGVAQGYLYYVSFAGVTGADRLDAQSAGDRLRGLRAQTQVPVVVGFGIRDAASAVVMAVDADGVVVGSALVTALSDAPDVDTACRRADAFLAPLRQALDAVK.

Residues E49 and D60 each act as proton acceptor in the active site.

It belongs to the TrpA family. Tetramer of two alpha and two beta chains.

The catalysed reaction is (1S,2R)-1-C-(indol-3-yl)glycerol 3-phosphate + L-serine = D-glyceraldehyde 3-phosphate + L-tryptophan + H2O. It participates in amino-acid biosynthesis; L-tryptophan biosynthesis; L-tryptophan from chorismate: step 5/5. Its function is as follows. The alpha subunit is responsible for the aldol cleavage of indoleglycerol phosphate to indole and glyceraldehyde 3-phosphate. The polypeptide is Tryptophan synthase alpha chain (Xylella fastidiosa (strain M23)).